We begin with the raw amino-acid sequence, 146 residues long: Gonadotropin subunit beta-2 (146 aa).

Positions 1–22 (MTVEISKVFVLMMLNLFLGASS) are cleaved as a signal peptide. Intrachain disulfides connect Cys37-Cys85, Cys51-Cys100, Cys54-Cys138, Cys62-Cys116, Cys66-Cys118, and Cys121-Cys128. Asn41 carries N-linked (GlcNAc...) asparagine glycosylation.

It belongs to the glycoprotein hormones subunit beta family. Heterodimer of an alpha and a beta chain.

The protein localises to the secreted. Involved in gametogenesis and steroidogenesis. In Trichopodus trichopterus (Three spot gourami), this protein is Gonadotropin subunit beta-2 (cgbb).